A 310-amino-acid polypeptide reads, in one-letter code: tRNA uridine(34) hydroxylase (310 aa).

The 95-residue stretch at A123 to S217 folds into the Rhodanese domain. C177 acts as the Cysteine persulfide intermediate in catalysis.

It belongs to the TrhO family.

The enzyme catalyses uridine(34) in tRNA + AH2 + O2 = 5-hydroxyuridine(34) in tRNA + A + H2O. Functionally, catalyzes oxygen-dependent 5-hydroxyuridine (ho5U) modification at position 34 in tRNAs. The chain is tRNA uridine(34) hydroxylase from Acaryochloris marina (strain MBIC 11017).